The following is a 526-amino-acid chain: Vang-like protein 1 (526 aa).

Low complexity predominate over residues 1-15; that stretch reads MDTESTYSGYSYYSS. Residues 1–87 form a disordered region; that stretch reads MDTESTYSGY…TTAITGTSEH (87 aa). Residues 1-114 are Cytoplasmic-facing; the sequence is MDTESTYSGY…VGLDCKRYLG (114 aa). The span at 75 to 87 shows a compositional bias: polar residues; that stretch reads GETTTAITGTSEH. Phosphoserine is present on residues Ser-88 and Ser-90. The helical transmembrane segment at 115–135 threads the bilayer; sequence LTVASFLGLLVFLTPIAFILL. The Extracellular segment spans residues 136–153; the sequence is PQILWREELKPCGAICEG. The chain crosses the membrane as a helical span at residues 154–174; that stretch reads LLISVSFKLLILLIGTWALFF. Over 175 to 184 the chain is Cytoplasmic; sequence RKQRADVPRV. Residues 185–205 traverse the membrane as a helical segment; sequence FVFRALLLVLIFLFVVSYWLF. The Extracellular segment spans residues 206–224; sequence YGVRILDSRDQNYKDIVQY. The chain crosses the membrane as a helical span at residues 225–245; that stretch reads AVSLVDALLFIHYLAIVLLEL. Topologically, residues 246-526 are cytoplasmic; that stretch reads RQLQPMFTLQ…VLRLQSETSV (281 aa).

Belongs to the Vang family. Heterodimer with Vangl2. Interacts through its C-terminal region with the N-terminal half of DVL1, DVL2 and DVL3. The PDZ domain of DVL1, DVL2 and DVL3 is required for the interaction.

The protein resides in the cell membrane. This Mus musculus (Mouse) protein is Vang-like protein 1 (Vangl1).